Reading from the N-terminus, the 20-residue chain is Alkaline phosphatase (20 aa).

Residues 1–20 form a disordered region; the sequence is TDMLAVSVSSTDAIGHKYGT.

As to quaternary structure, homodimer; may be disulfide-linked. In terms of processing, the N-terminus is blocked.

The catalysed reaction is a phosphate monoester + H2O = an alcohol + phosphate. Its activity is regulated as follows. Completely inhibited by thiol-reducing agents, such as DTT and 2-mercaptoethanol. Activity was also inhibited by sodium orthovanadate, sodium molybdate, N-ethylmaleimide, EDTA and zinc ion, but was not inhibited by okadaic acid. In terms of biological role, acts against tyrosine-phosphatases. The protein is Alkaline phosphatase of Prevotella intermedia.